Here is a 618-residue protein sequence, read N- to C-terminus: Dihydroxy-acid dehydratase (618 aa).

Position 81 (Asp-81) interacts with Mg(2+). Position 122 (Cys-122) interacts with [2Fe-2S] cluster. Residues Asp-123 and Lys-124 each contribute to the Mg(2+) site. Position 124 is an N6-carboxylysine (Lys-124). Cys-195 is a [2Fe-2S] cluster binding site. A Mg(2+)-binding site is contributed by Glu-491. Ser-517 serves as the catalytic Proton acceptor.

This sequence belongs to the IlvD/Edd family. Homodimer. Requires [2Fe-2S] cluster as cofactor. It depends on Mg(2+) as a cofactor.

It catalyses the reaction (2R)-2,3-dihydroxy-3-methylbutanoate = 3-methyl-2-oxobutanoate + H2O. It carries out the reaction (2R,3R)-2,3-dihydroxy-3-methylpentanoate = (S)-3-methyl-2-oxopentanoate + H2O. It functions in the pathway amino-acid biosynthesis; L-isoleucine biosynthesis; L-isoleucine from 2-oxobutanoate: step 3/4. Its pathway is amino-acid biosynthesis; L-valine biosynthesis; L-valine from pyruvate: step 3/4. In terms of biological role, functions in the biosynthesis of branched-chain amino acids. Catalyzes the dehydration of (2R,3R)-2,3-dihydroxy-3-methylpentanoate (2,3-dihydroxy-3-methylvalerate) into 2-oxo-3-methylpentanoate (2-oxo-3-methylvalerate) and of (2R)-2,3-dihydroxy-3-methylbutanoate (2,3-dihydroxyisovalerate) into 2-oxo-3-methylbutanoate (2-oxoisovalerate), the penultimate precursor to L-isoleucine and L-valine, respectively. The chain is Dihydroxy-acid dehydratase from Rhodopseudomonas palustris (strain TIE-1).